Here is a 1384-residue protein sequence, read N- to C-terminus: DNA-directed RNA polymerase subunit beta'' (1384 aa).

The Zn(2+) site is built by Cys224, Cys297, Cys304, and Cys307.

The protein belongs to the RNA polymerase beta' chain family. RpoC2 subfamily. In plastids the minimal PEP RNA polymerase catalytic core is composed of four subunits: alpha, beta, beta', and beta''. When a (nuclear-encoded) sigma factor is associated with the core the holoenzyme is formed, which can initiate transcription. Zn(2+) serves as cofactor.

It is found in the plastid. Its subcellular location is the chloroplast. The catalysed reaction is RNA(n) + a ribonucleoside 5'-triphosphate = RNA(n+1) + diphosphate. Its function is as follows. DNA-dependent RNA polymerase catalyzes the transcription of DNA into RNA using the four ribonucleoside triphosphates as substrates. This Sinapis alba (White mustard) protein is DNA-directed RNA polymerase subunit beta''.